The following is a 152-amino-acid chain: Ubiquitin-conjugating enzyme E2 W (152 aa).

A Peptide (Met-Gly) (interchain with G-Cter in ubiquitin) cross-link involves residue Met1. The region spanning 4 to 152 is the UBC core domain; the sequence is AATRRLMKEL…TRWWFHDDSV (149 aa). The Glycyl thioester intermediate role is filled by Cys92.

Belongs to the ubiquitin-conjugating enzyme family.

It carries out the reaction S-ubiquitinyl-[E1 ubiquitin-activating enzyme]-L-cysteine + [E2 ubiquitin-conjugating enzyme]-L-cysteine = [E1 ubiquitin-activating enzyme]-L-cysteine + S-ubiquitinyl-[E2 ubiquitin-conjugating enzyme]-L-cysteine.. The catalysed reaction is S-ubiquitinyl-[E1 ubiquitin-activating enzyme]-L-cysteine + [acceptor protein]-N-terminal-amino acid = [E1 ubiquitin-activating enzyme]-L-cysteine + N-terminal-ubiquitinyl-[acceptor protein].. The protein operates within protein modification; protein ubiquitination. Its function is as follows. Accepts ubiquitin from the E1 complex and catalyzes its covalent attachment to other proteins. Together with ubc-18, required for the ubiquitination of membranous organelles, and the removal of paternal mitochondria from early embryos. The polypeptide is Ubiquitin-conjugating enzyme E2 W (Caenorhabditis elegans).